The following is a 306-amino-acid chain: MIGQKTLYSFFSPTPTGKRTTRSPEPVPGSGVAAEIGGDAVASPAKKARVEQNEQGSPLSAEQLVRIQRNKAAALLRLAARNVPAGFGESWKQQLCGEFGKPYFVKLMGFVAEERNHHKVYPPPEQVFTWTQMCDIRDVKVVILGQDPYHGPNQAHGLCFSVQRPVPPPPSLENIFKELSTDIDGFVHPGHGDLSGWARQGVLLLNAVLTVRAHQANSHKERGWEQFTDAVVSWLNQNLSGLVFLLWGSYAQKKGSVIDRKRHHVLQTAHPSPLSVHRGFLGCRHFSKANELLQKSGKKPINWKEL.

Residues 1–25 (MIGQKTLYSFFSPTPTGKRTTRSPE) form an interaction with FAM72A region. The tract at residues 11 to 31 (FSPTPTGKRTTRSPEPVPGSG) is disordered. The residue at position 12 (Ser-12) is a Phosphoserine. The Important for nuclear sorting motif lies at 17-19 (GKR). Residues Ser-23, Ser-43, and Ser-57 each carry the phosphoserine modification. The interaction with RPA2 stretch occupies residues 66–81 (RIQRNKAAALLRLAAR). Uracil is bound at residue Gln-146. Asp-147 (proton acceptor) is an active-site residue. Residue His-150 participates in dsDNA binding. Phe-160 provides a ligand contact to uracil. Ser-171 contributes to the dsDNA binding site. Position 206 (Asn-206) interacts with uracil. DsDNA contacts are provided by Ser-249, His-270, Ser-272, and Arg-278. His-270 provides a ligand contact to uracil. N6-acetyllysine is present on Lys-288.

The protein belongs to the uracil-DNA glycosylase (UDG) superfamily. UNG family. In terms of assembly, interacts with RPA2 subunit of the RPA trimer; this interaction mediates UNG2 recruitment to RPA-coated single-stranded DNA at stalled replication forks. Interacts with PCNA; this interaction mediates UNG2 recruitment to S-phase replication foci. Interacts (via N-terminus) with FAM72A. Post-translationally, processed by cleavage of a transit peptide.

It localises to the mitochondrion. The protein resides in the nucleus. It carries out the reaction Hydrolyzes single-stranded DNA or mismatched double-stranded DNA and polynucleotides, releasing free uracil.. The enzyme catalyses a 2'-deoxyuridine in single-stranded DNA + H2O = a 2'-deoxyribose 5'-monophosphate in single-stranded DNA + uracil. It catalyses the reaction a 2'-deoxyuridine in double-stranded DNA + H2O = a 2'-deoxyribose 5'-monophosphate in double-stranded DNA + uracil. In terms of biological role, uracil-DNA glycosylase that hydrolyzes the N-glycosidic bond between uracil and deoxyribose in single- and double-stranded DNA (ssDNA and dsDNA) to release a free uracil residue and form an abasic (apurinic/apyrimidinic; AP) site. Excises uracil residues arising as a result of misincorporation of dUMP residues by DNA polymerase during replication or due to spontaneous or enzymatic deamination of cytosine. Mediates error-free base excision repair (BER) of uracil at replication forks. According to the model, it is recruited by PCNA to S-phase replication forks to remove misincorporated uracil at U:A base mispairs in nascent DNA strands. Via trimeric RPA it is recruited to ssDNA stretches ahead of the polymerase to allow detection and excision of deaminated cytosines prior to replication. The resultant AP sites temporarily stall replication, allowing time to repair the lesion. Mediates mutagenic uracil processing involved in antibody affinity maturation. Processes AICDA-induced U:G base mispairs at variable Ig regions leading to the generation of transversion mutations. Additionally, it operates at switch sites of Ig constant regions where it mediates Ig isotype class switch recombination. Excises AICDA-induced uracil residues forming AP sites that are subsequently nicked by APEX1 endonuclease. The accumulation of staggered nicks in opposite strands results in double strand DNA breaks that are finally resolved via non-homologous end joining repair pathway. In Mus musculus (Mouse), this protein is Uracil-DNA glycosylase (Ung).